The sequence spans 361 residues: Phospho-N-acetylmuramoyl-pentapeptide-transferase (361 aa).

A run of 10 helical transmembrane segments spans residues 28–48, 74–94, 99–119, 133–153, 168–188, 203–223, 236–256, 263–283, 288–308, and 338–358; these read LAII…IEFL, TMGG…LADL, IWIT…DDYA, SKLL…EYLD, LSLD…VGSS, VPIA…GNLI, TGEL…FLWF, VFMG…ISVI, IVLA…ILQV, and KVVI…LSSL.

It belongs to the glycosyltransferase 4 family. MraY subfamily. It depends on Mg(2+) as a cofactor.

The protein resides in the cell inner membrane. The enzyme catalyses UDP-N-acetyl-alpha-D-muramoyl-L-alanyl-gamma-D-glutamyl-meso-2,6-diaminopimeloyl-D-alanyl-D-alanine + di-trans,octa-cis-undecaprenyl phosphate = di-trans,octa-cis-undecaprenyl diphospho-N-acetyl-alpha-D-muramoyl-L-alanyl-D-glutamyl-meso-2,6-diaminopimeloyl-D-alanyl-D-alanine + UMP. It functions in the pathway cell wall biogenesis; peptidoglycan biosynthesis. In terms of biological role, catalyzes the initial step of the lipid cycle reactions in the biosynthesis of the cell wall peptidoglycan: transfers peptidoglycan precursor phospho-MurNAc-pentapeptide from UDP-MurNAc-pentapeptide onto the lipid carrier undecaprenyl phosphate, yielding undecaprenyl-pyrophosphoryl-MurNAc-pentapeptide, known as lipid I. This Rickettsia africae (strain ESF-5) protein is Phospho-N-acetylmuramoyl-pentapeptide-transferase.